We begin with the raw amino-acid sequence, 85 residues long: Hepcidin (85 aa).

A signal peptide spans 1–24 (MKTFSVAVAVAVVLAFICLQESSA). Residues 25 to 64 (VPANEEQELEQQIYFADPEMPVESCKMPYYMRENRQGSPA) constitute a propeptide that is removed on maturation. 4 disulfides stabilise this stretch: Cys66/Cys83, Cys69/Cys72, Cys70/Cys79, and Cys73/Cys82.

In terms of assembly, monomer. In terms of tissue distribution, expressed in all tissues tested, with highest levels of expression in kidney and lowest levels in liver. Intra-peritoneal injection of lipopolysaccharide results in increased expression in heart, spleen and stomach, but not in kidney or liver.

The protein resides in the secreted. Its function is as follows. Seems to act as a signaling molecule involved in the maintenance of iron homeostasis. Seems to be required in conjunction with HFE to regulate both intestinal iron absorption and iron storage in macrophages. In terms of biological role, has very strong antibacterial activity against the marine Gram-negative bacteria V.alginolyticus (MIC=24 uM), V.fluvialis, V.harveyis (MIC=12 uM) and V.parahaemolyticus (MIC=6 uM). Has antibacterial activity against the Gram-negative bacteria A.hydrophila (MIC=6 uM), E.coli (MIC=24 uM), and E.coli BL21(DE3)plysS (MIC=6 uM), and the Gram-positive bacteria B.cereus (MIC=24 uM), B.subtilis (MIC=6 uM), C.glutamicum (MIC=3 uM), M.luteus (MIC=3 uM), M.lysodeikticus, S.aureus (MIC=6 uM) and S.epidermis (MIC=12 uM). Possesses antifungal activity against A.niger (MIC=24 uM), F.graminearum (MIC24 uM) and F.solani (MIC=24 uM), but lacks antifungal activity against the yeasts P.pastoris GS115 and C.albicans. The polypeptide is Hepcidin (Larimichthys crocea (Large yellow croaker)).